We begin with the raw amino-acid sequence, 304 residues long: Non-specific ribonucleoside hydrolase RihC (304 aa).

The active site involves His-233.

It belongs to the IUNH family. RihC subfamily.

In terms of biological role, hydrolyzes both purine and pyrimidine ribonucleosides with a broad-substrate specificity. The polypeptide is Non-specific ribonucleoside hydrolase RihC (Escherichia coli O6:H1 (strain CFT073 / ATCC 700928 / UPEC)).